The following is a 178-amino-acid chain: Ribosome maturation factor RimM (178 aa).

A PRC barrel domain is found at 93–170 (EGSYYYHELR…ALTADAPAGL (78 aa)).

It belongs to the RimM family. Binds ribosomal protein uS19.

It is found in the cytoplasm. In terms of biological role, an accessory protein needed during the final step in the assembly of 30S ribosomal subunit, possibly for assembly of the head region. Essential for efficient processing of 16S rRNA. May be needed both before and after RbfA during the maturation of 16S rRNA. It has affinity for free ribosomal 30S subunits but not for 70S ribosomes. In Deinococcus geothermalis (strain DSM 11300 / CIP 105573 / AG-3a), this protein is Ribosome maturation factor RimM.